Consider the following 399-residue polypeptide: Vitamin K-dependent protein Z (399 aa).

The N-terminal stretch at 1-22 (MAGCILLLRGFILTLILHQVEL) is a signal peptide. Residues 23–40 (SVFLPAPKANNVLRRWRR) constitute a propeptide that is removed on maturation. A Gla domain is found at 41–86 (GSSYFLEEIFQGNLEKECYEEVCNYEEAREVFENDVITDEFWRQYG). 4-carboxyglutamate occurs at positions 47, 48, 55, 57, 60, 61, 66, 67, 70, 73, and 80. Cysteine 58 and cysteine 63 are oxidised to a cystine. EGF-like domains are found at residues 87-123 (GGSP…KTCA) and 125-166 (AKNE…KSCG). Cystine bridges form between cysteine 91–cysteine 102, cysteine 96–cysteine 111, cysteine 113–cysteine 122, cysteine 129–cysteine 141, cysteine 137–cysteine 150, cysteine 152–cysteine 165, and cysteine 208–cysteine 224. N-linked (GlcNAc...) asparagine glycosylation occurs at asparagine 99. Aspartate 104 bears the (3R)-3-hydroxyaspartate mark. A Peptidase S1 domain is found at 172 to 399 (ACGALTSEHI…YSMWFKQIMK (228 aa)). N-linked (GlcNAc...) asparagine glycosylation is found at asparagine 230, asparagine 305, and asparagine 331. Cysteines 326 and 340 form a disulfide.

This sequence belongs to the peptidase S1 family. In terms of processing, the iron and 2-oxoglutarate dependent 3-hydroxylation of aspartate and asparagine is (R) stereospecific within EGF domains. As to expression, plasma.

Its subcellular location is the secreted. Appears to assist hemostasis by binding thrombin and promoting its association with phospholipid vesicles. Inhibits activity of the coagulation protease factor Xa in the presence of SERPINA10, calcium and phospholipids. The polypeptide is Vitamin K-dependent protein Z (Proz) (Mus musculus (Mouse)).